The primary structure comprises 64 residues: Large ribosomal subunit protein bL35 (64 aa).

A disordered region spans residues 1-25; it reads MPKLKTHSGAAKRFKKTATGKVKRS.

It belongs to the bacterial ribosomal protein bL35 family.

The chain is Large ribosomal subunit protein bL35 from Koribacter versatilis (strain Ellin345).